Reading from the N-terminus, the 295-residue chain is MALPEFSMRQLLEAGAHFGHQTHRWNPKMDKYIFGARSNIHIIDLSQSIPLLHQALVKVREVAAGGGRILFVGTKRQASEPIATAAKRCAQYYVNHRWLGGTLTNWRTVSNSIARLRELESVLGGEGQGRSKKELLQLTRERDKLELSLGGIKDMGGIPDLMFVIDTNKEAIAIQEARKLNIPVIAILDTNCNPDGITYPIPGNDDAARAIQLYCDLMADAILDGLAAGQAASGVDLGASEAPVEPTLARELAPEAPAPEAPAEEAPAAEAAPAAEAAPAAEAAPAEASSEEQAG.

The tract at residues 242-295 (APVEPTLARELAPEAPAPEAPAEEAPAAEAAPAAEAAPAAEAAPAEASSEEQAG) is disordered. A compositionally biased stretch (low complexity) spans 264-288 (EEAPAAEAAPAAEAAPAAEAAPAEA).

The protein belongs to the universal ribosomal protein uS2 family.

The sequence is that of Small ribosomal subunit protein uS2 from Phenylobacterium zucineum (strain HLK1).